The chain runs to 451 residues: 3-phosphoshikimate 1-carboxyvinyltransferase (451 aa).

3-phosphoshikimate-binding residues include lysine 28, serine 29, and arginine 33. Lysine 28 is a binding site for phosphoenolpyruvate. Phosphoenolpyruvate contacts are provided by glycine 105 and arginine 133. 3-phosphoshikimate contacts are provided by serine 178, glutamine 180, aspartate 331, and lysine 358. Glutamine 180 provides a ligand contact to phosphoenolpyruvate. Aspartate 331 (proton acceptor) is an active-site residue. The phosphoenolpyruvate site is built by arginine 362 and arginine 406.

The protein belongs to the EPSP synthase family. As to quaternary structure, monomer.

It is found in the cytoplasm. The catalysed reaction is 3-phosphoshikimate + phosphoenolpyruvate = 5-O-(1-carboxyvinyl)-3-phosphoshikimate + phosphate. It functions in the pathway metabolic intermediate biosynthesis; chorismate biosynthesis; chorismate from D-erythrose 4-phosphate and phosphoenolpyruvate: step 6/7. Catalyzes the transfer of the enolpyruvyl moiety of phosphoenolpyruvate (PEP) to the 5-hydroxyl of shikimate-3-phosphate (S3P) to produce enolpyruvyl shikimate-3-phosphate and inorganic phosphate. The sequence is that of 3-phosphoshikimate 1-carboxyvinyltransferase from Rhodospirillum rubrum (strain ATCC 11170 / ATH 1.1.1 / DSM 467 / LMG 4362 / NCIMB 8255 / S1).